The primary structure comprises 283 residues: ATP phosphoribosyltransferase (283 aa).

It belongs to the ATP phosphoribosyltransferase family. Long subfamily. It depends on Mg(2+) as a cofactor.

It is found in the cytoplasm. The enzyme catalyses 1-(5-phospho-beta-D-ribosyl)-ATP + diphosphate = 5-phospho-alpha-D-ribose 1-diphosphate + ATP. It functions in the pathway amino-acid biosynthesis; L-histidine biosynthesis; L-histidine from 5-phospho-alpha-D-ribose 1-diphosphate: step 1/9. Feedback inhibited by histidine. Functionally, catalyzes the condensation of ATP and 5-phosphoribose 1-diphosphate to form N'-(5'-phosphoribosyl)-ATP (PR-ATP). Has a crucial role in the pathway because the rate of histidine biosynthesis seems to be controlled primarily by regulation of HisG enzymatic activity. In Phocaeicola vulgatus (strain ATCC 8482 / DSM 1447 / JCM 5826 / CCUG 4940 / NBRC 14291 / NCTC 11154) (Bacteroides vulgatus), this protein is ATP phosphoribosyltransferase.